The following is a 780-amino-acid chain: ATP-dependent 6-phosphofructokinase, liver type (780 aa).

Ala-2 is modified (N-acetylalanine). The segment at 2 to 390 is N-terminal catalytic PFK domain 1; sequence AAVDLEKLRA…NWNIYKLLAH (389 aa). Residues Gly-25, 88-89, and 118-121 contribute to the ATP site; these read RC and GDGS. A Mg(2+)-binding site is contributed by Asp-119. Substrate-binding positions include 164 to 166, Arg-201, 208 to 210, Glu-264, Arg-292, and 298 to 301; these read SID, MGR, and HVQR. Asp-166 (proton acceptor) is an active-site residue. The residue at position 377 (Ser-377) is a Phosphoserine. Residues 391-400 are interdomain linker; it reads QKPPKEKSNF. Positions 401–780 are C-terminal regulatory PFK domain 2; sequence SLAILNVGAP…RRTLSMDKGF (380 aa). Beta-D-fructose 2,6-bisphosphate contacts are provided by residues Arg-470, 527–531, Arg-565, 572–574, and Glu-628; these read TISNN and MGG. Ser-529 is a glycosylation site (O-linked (GlcNAc) serine). Tyr-640 bears the Phosphotyrosine mark. Beta-D-fructose 2,6-bisphosphate contacts are provided by residues Arg-654, 660–663, and Arg-734; that span reads HLQQ. At Ser-775 the chain carries Phosphoserine.

This sequence belongs to the phosphofructokinase type A (PFKA) family. ATP-dependent PFK group I subfamily. Eukaryotic two domain clade 'E' sub-subfamily. Homo- and heterotetramers. Phosphofructokinase (PFK) enzyme functions as a tetramer composed of different combinations of 3 types of subunits, called PFKM (where M stands for Muscle), PFKL (Liver) and PFKP (Platelet). The composition of the PFK tetramer differs according to the tissue type it is present in. In muscles, it is composed of 4 PFKM subunits (also called M4). In the liver, the predominant form is a tetramer of PFKL subunits (L4). In erythrocytes, both PFKM and PFKL subunits randomly tetramerize to form M4, L4 and other combinations (ML3, M2L2, M3L). The kinetic and regulatory properties of the tetrameric enzyme are dependent on the subunit composition, hence can vary across tissues. Mg(2+) is required as a cofactor. In terms of processing, glcNAcylation at Ser-529 by OGT decreases enzyme activity, leading to redirect glucose flux through the oxidative pentose phosphate pathway. Glycosylation is stimulated by both hypoxia and glucose deprivation.

The protein resides in the cytoplasm. It carries out the reaction beta-D-fructose 6-phosphate + ATP = beta-D-fructose 1,6-bisphosphate + ADP + H(+). It functions in the pathway carbohydrate degradation; glycolysis; D-glyceraldehyde 3-phosphate and glycerone phosphate from D-glucose: step 3/4. With respect to regulation, allosterically activated by ADP, AMP, or fructose 2,6-bisphosphate, and allosterically inhibited by ATP or citrate. GlcNAcylation by OGT overcomes allosteric regulation. In terms of biological role, catalyzes the phosphorylation of D-fructose 6-phosphate to fructose 1,6-bisphosphate by ATP, the first committing step of glycolysis. Negatively regulates the phagocyte oxidative burst in response to bacterial infection by controlling cellular NADPH biosynthesis and NADPH oxidase-derived reactive oxygen species. Upon macrophage activation, drives the metabolic switch toward glycolysis, thus preventing glucose turnover that produces NADPH via pentose phosphate pathway. The sequence is that of ATP-dependent 6-phosphofructokinase, liver type from Homo sapiens (Human).